Consider the following 159-residue polypeptide: Cytochrome c nitrite reductase subunit NrfH (159 aa).

Residues Ser2–Lys14 are Cytoplasmic-facing. Residues Leu15–Gly33 form a helical; Signal-anchor for type II membrane protein membrane-spanning segment. The Periplasmic portion of the chain corresponds to Met34–Glu159. Cys43, Cys46, Met49, His61, and Cys66 together coordinate heme. A menaquinol is bound at residue Asn67. 2 residues coordinate heme: Cys69 and His70. Lys82 and Asp89 together coordinate a menaquinol. Asp89 lines the heme pocket. Residues Gly99 to Asp100 are interaction with NrfA. Heme contacts are provided by Cys116, Cys119, His120, Cys136, Cys139, His140, and His145. The segment at Thr123–Asp158 is interaction with NrfA.

The protein belongs to the NapC/NirT/NrfH family. As to quaternary structure, component of the NrfHA cytochrome c nitrite reductase complex composed of 4 NrfA catalytic subunits and 2 NrfH quinone-binding subunits. Interacts with NrfA homodimer. It depends on heme as a cofactor.

Its subcellular location is the cell inner membrane. Electron donor subunit of the cytochrome c nitrite reductase holocomplex NrfHA. Acquires electrons from the menaquinone pool and mediates their transfer to the catalytic subunit NrfA in an anaerobic respiratory process of nitrite. The other biological function of the NrfHA holocomplex is to detoxify nitrite. This function is essential for the survival of this organism as it enables it to overcome inhibition by nitrite, which is produced by other organisms living in the same environment. The polypeptide is Cytochrome c nitrite reductase subunit NrfH (Nitratidesulfovibrio vulgaris (strain ATCC 29579 / DSM 644 / CCUG 34227 / NCIMB 8303 / VKM B-1760 / Hildenborough) (Desulfovibrio vulgaris)).